The primary structure comprises 378 residues: Probable pectin lyase A (378 aa).

An N-terminal signal peptide occupies residues 1 to 18; the sequence is MKYQDLLAIAGCIANAGA. 2 cysteine pairs are disulfide-bonded: Cys-81/Cys-100 and Cys-90/Cys-224. Asn-127 carries an N-linked (GlcNAc...) asparagine glycan. Arg-254 is a catalytic residue. Residues Cys-321 and Cys-329 are joined by a disulfide bond.

Belongs to the polysaccharide lyase 1 family.

The protein localises to the secreted. The enzyme catalyses Eliminative cleavage of (1-&gt;4)-alpha-D-galacturonan methyl ester to give oligosaccharides with 4-deoxy-6-O-methyl-alpha-D-galact-4-enuronosyl groups at their non-reducing ends.. In terms of biological role, pectinolytic enzymes consist of four classes of enzymes: pectin lyase, polygalacturonase, pectin methylesterase and rhamnogalacturonase. Among pectinolytic enzymes, pectin lyase is the most important in depolymerization of pectin, since it cleaves internal glycosidic bonds of highly methylated pectins. The protein is Probable pectin lyase A (pelA) of Aspergillus fumigatus (strain CBS 144.89 / FGSC A1163 / CEA10) (Neosartorya fumigata).